Consider the following 229-residue polypeptide: ATP-dependent dethiobiotin synthetase BioD (229 aa).

12 to 17 (GVGKTV) contributes to the ATP binding site. Mg(2+) is bound at residue Thr16. Lys37 is an active-site residue. Thr41 contributes to the substrate binding site. Residues Asp53, 112–115 (EGAG), and 201–203 (PAG) each bind ATP. Positions 53 and 112 each coordinate Mg(2+).

It belongs to the dethiobiotin synthetase family. Homodimer. It depends on Mg(2+) as a cofactor.

The protein localises to the cytoplasm. It catalyses the reaction (7R,8S)-7,8-diammoniononanoate + CO2 + ATP = (4R,5S)-dethiobiotin + ADP + phosphate + 3 H(+). The protein operates within cofactor biosynthesis; biotin biosynthesis; biotin from 7,8-diaminononanoate: step 1/2. Its function is as follows. Catalyzes a mechanistically unusual reaction, the ATP-dependent insertion of CO2 between the N7 and N8 nitrogen atoms of 7,8-diaminopelargonic acid (DAPA, also called 7,8-diammoniononanoate) to form a ureido ring. This chain is ATP-dependent dethiobiotin synthetase BioD, found in Mycobacterium sp. (strain JLS).